A 230-amino-acid chain; its full sequence is Urease accessory protein UreF (230 aa).

Belongs to the UreF family. UreD, UreF and UreG form a complex that acts as a GTP-hydrolysis-dependent molecular chaperone, activating the urease apoprotein by helping to assemble the nickel containing metallocenter of UreC. The UreE protein probably delivers the nickel.

The protein localises to the cytoplasm. Functionally, required for maturation of urease via the functional incorporation of the urease nickel metallocenter. This chain is Urease accessory protein UreF, found in Allorhizobium ampelinum (strain ATCC BAA-846 / DSM 112012 / S4) (Agrobacterium vitis (strain S4)).